The sequence spans 216 residues: Putative cat eye syndrome critical region protein 9 (216 aa).

The N-terminal stretch at 1-23 is a signal peptide; the sequence is MQSHLAPLACAAAAGRAGGSCQA. N148 carries an N-linked (GlcNAc...) asparagine glycan.

Ubiquitously expressed with higher expression in heart.

The protein localises to the secreted. The chain is Putative cat eye syndrome critical region protein 9 (CECR9) from Homo sapiens (Human).